We begin with the raw amino-acid sequence, 428 residues long: Histidine--tRNA ligase (428 aa).

It belongs to the class-II aminoacyl-tRNA synthetase family. As to quaternary structure, homodimer.

It is found in the cytoplasm. It carries out the reaction tRNA(His) + L-histidine + ATP = L-histidyl-tRNA(His) + AMP + diphosphate + H(+). The polypeptide is Histidine--tRNA ligase (Chromohalobacter salexigens (strain ATCC BAA-138 / DSM 3043 / CIP 106854 / NCIMB 13768 / 1H11)).